The primary structure comprises 500 residues: E3 ubiquitin-protein ligase TRIM69 (500 aa).

The disordered stretch occupies residues 1–22; the sequence is MEVSSRPPSNFDPGNYVEMSDP. Residues 1 to 153 are necessary for nuclear localization; it reads MEVSSRPPSN…SMGQSKDFLQ (153 aa). The RING-type zinc finger occupies 42-83; the sequence is CPLCNDWFRDPLMLTCGHNFCQDCIQSFWKVHSKETFCPDCK. Positions 217–256 form a coiled coil; the sequence is NKEKDILNDLRDEGKLLNEEMEVNLNQIQEQCLVAKDMLA. In terms of domain architecture, B30.2/SPRY spans 306 to 500; sequence PIQYIIWKEM…KEPLHIVHPQ (195 aa). Ser342 bears the Phosphoserine mark.

The protein belongs to the TRIM/RBCC family. In terms of assembly, homo-multimer; required for antiviral activity. Interacts with PML. In terms of processing, phosphorylated. Phosphorylation is necessary for nuclear localization. As to expression, expressed in spermatid.

The protein localises to the cytoplasm. The protein resides in the nucleus. It localises to the nucleus speckle. Its subcellular location is the cytoskeleton. It is found in the microtubule organizing center. The protein localises to the centrosome. The catalysed reaction is S-ubiquitinyl-[E2 ubiquitin-conjugating enzyme]-L-cysteine + [acceptor protein]-L-lysine = [E2 ubiquitin-conjugating enzyme]-L-cysteine + N(6)-ubiquitinyl-[acceptor protein]-L-lysine.. It participates in protein modification; protein ubiquitination. E3 ubiquitin ligase that plays an important role in antiviral immunity by restricting different viral infections including dengue virus or vesicular stomatitis indiana virus. Ubiquitinates viral proteins such as dengue virus NS3 thereby limiting infection. In addition, acts as a key mediator of type I interferon induced microtubule stabilization by directly associating to microtubules independently of its E3 ligase activity. Also plays a role in cataract formation together with TP53. Mechanistically, inhibits UVB-induced cell apoptosis and reactive oxygen species (ROS) production by inducing TP53 ubiquitination. Regulates centrosome dynamics and mitotic progression by ubiquitinating STK3/MST2; leading to its redistribution to the perinuclear cytoskeleton and subsequent phosphorylation by PLK1. The protein is E3 ubiquitin-protein ligase TRIM69 (Trim69) of Mus musculus (Mouse).